We begin with the raw amino-acid sequence, 213 residues long: Proteasome subunit beta (213 aa).

Positions Met1 to Gly11 are cleaved as a propeptide — removed in mature form; by autocatalysis. Catalysis depends on Thr12, which acts as the Nucleophile.

It belongs to the peptidase T1B family. As to quaternary structure, the 20S proteasome core is composed of 14 alpha and 14 beta subunits that assemble into four stacked heptameric rings, resulting in a barrel-shaped structure. The two inner rings, each composed of seven catalytic beta subunits, are sandwiched by two outer rings, each composed of seven alpha subunits. The catalytic chamber with the active sites is on the inside of the barrel. Has a gated structure, the ends of the cylinder being occluded by the N-termini of the alpha-subunits. Is capped at one or both ends by the proteasome regulatory ATPase, PAN.

It is found in the cytoplasm. It carries out the reaction Cleavage of peptide bonds with very broad specificity.. The formation of the proteasomal ATPase PAN-20S proteasome complex, via the docking of the C-termini of PAN into the intersubunit pockets in the alpha-rings, triggers opening of the gate for substrate entry. Interconversion between the open-gate and close-gate conformations leads to a dynamic regulation of the 20S proteasome proteolysis activity. Component of the proteasome core, a large protease complex with broad specificity involved in protein degradation. This chain is Proteasome subunit beta, found in Methanoregula boonei (strain DSM 21154 / JCM 14090 / 6A8).